Here is a 306-residue protein sequence, read N- to C-terminus: HORMA domain-containing protein 2 (306 aa).

In terms of domain architecture, HORMA spans 29 to 232; it reads HESLVVVKKL…SGFHSMKVKV (204 aa). At Ser271 the chain carries Phosphoserine.

As to quaternary structure, interacts with HORMAD1. Phosphorylated in a SPO11-dependent manner. Specifically expressed in meiotic germ cells.

The protein localises to the nucleus. The protein resides in the chromosome. Essential for synapsis surveillance during meiotic prophase via the recruitment of ATR activity. Plays a key role in the male mid-pachytene checkpoint and the female meiotic prophase checkpoint: required for efficient build-up of ATR activity on unsynapsed chromosome regions, a process believed to form the basis of meiotic silencing of unsynapsed chromatin (MSUC) and meiotic prophase quality control in both sexes. Required for the DNA double-strand break-independent, BRCA1-dependent activation of ATR on the sex chromosomes that is essential for normal sex body formation. This is HORMA domain-containing protein 2 (Hormad2) from Mus musculus (Mouse).